Reading from the N-terminus, the 132-residue chain is Cytochrome b5 (132 aa).

The 77-residue stretch at G2–D78 folds into the Cytochrome b5 heme-binding domain. Heme is bound by residues H37 and H61. Residues F104–I124 form a helical membrane-spanning segment.

The protein belongs to the cytochrome b5 family.

It localises to the endoplasmic reticulum membrane. The protein resides in the microsome membrane. Functionally, membrane bound hemoprotein which function as an electron carrier for several membrane bound oxygenases. The chain is Cytochrome b5 from Borago officinalis (Bourrache).